Here is a 569-residue protein sequence, read N- to C-terminus: Oxygen-dependent choline dehydrogenase (569 aa).

9–38 is an FAD binding site; it reads DYVIIGGGSAGSVLGNRLSEDKDKEVLVLE. The active-site Proton acceptor is the H475.

It belongs to the GMC oxidoreductase family. The cofactor is FAD.

It carries out the reaction choline + A = betaine aldehyde + AH2. It catalyses the reaction betaine aldehyde + NAD(+) + H2O = glycine betaine + NADH + 2 H(+). It participates in amine and polyamine biosynthesis; betaine biosynthesis via choline pathway; betaine aldehyde from choline (cytochrome c reductase route): step 1/1. Its function is as follows. Involved in the biosynthesis of the osmoprotectant glycine betaine. Catalyzes the oxidation of choline to betaine aldehyde and betaine aldehyde to glycine betaine at the same rate. This Staphylococcus aureus (strain MSSA476) protein is Oxygen-dependent choline dehydrogenase.